We begin with the raw amino-acid sequence, 48 residues long: Bacteriochlorophyll c-binding protein (48 aa).

Position 25 (histidine 25) interacts with a bacteriochlorophyll c.

This sequence belongs to the BChl C/E-binding protein family.

It localises to the chlorosome. The protein localises to the chlorosome envelope. In terms of biological role, component of the photosynthetic apparatus. The light harvesting B740 complex binds bacteriochlorophyll c. The polypeptide is Bacteriochlorophyll c-binding protein (csmA) (Chlorobaculum thiosulfatiphilum (Chlorobium limicola f.sp. thiosulfatophilum)).